We begin with the raw amino-acid sequence, 273 residues long: Glutamate 5-kinase (273 aa).

Residue Lys15 participates in ATP binding. Substrate-binding residues include Ser55, Asp142, and Asn158. ATP is bound by residues 178–179 (SD) and 220–226 (TGGMLSK).

This sequence belongs to the glutamate 5-kinase family.

The protein resides in the cytoplasm. It carries out the reaction L-glutamate + ATP = L-glutamyl 5-phosphate + ADP. Its pathway is amino-acid biosynthesis; L-proline biosynthesis; L-glutamate 5-semialdehyde from L-glutamate: step 1/2. In terms of biological role, catalyzes the transfer of a phosphate group to glutamate to form L-glutamate 5-phosphate. The sequence is that of Glutamate 5-kinase from Streptococcus pyogenes serotype M6 (strain ATCC BAA-946 / MGAS10394).